The primary structure comprises 426 residues: Outer capsid protein P8 (426 aa).

Belongs to the phytoreovirus outer capsid protein P8 family. As to quaternary structure, homotrimer. Homomultimer.

The protein resides in the virion. The protein localises to the host cytoplasm. Its function is as follows. Capsid protein which self-assembles to form the outer icosahedral capsid with a T=13 symmetry, about 70 nm in diameter and consisting of 260 P8 trimers. Mediates the secretion of assembled virus-like particles from host insect cells. The protein is Outer capsid protein P8 of Nephotettix cincticeps (Green rice leafhopper).